The following is a 520-amino-acid chain: 3-phosphoshikimate 1-carboxyvinyltransferase, chloroplastic (520 aa).

The transit peptide at 1-76 (MAQISSMAQG…RISASVATAE (76 aa)) directs the protein to the chloroplast. 3-phosphoshikimate contacts are provided by K99, S100, and R104. K99 provides a ligand contact to phosphoenolpyruvate. Phosphoenolpyruvate-binding residues include G177 and R207. 3-phosphoshikimate contacts are provided by S254, S255, Q256, S282, D407, and K434. Phosphoenolpyruvate is bound at residue Q256. The active-site Proton acceptor is D407. The phosphoenolpyruvate site is built by R438, R480, and K505.

The protein belongs to the EPSP synthase family.

The protein resides in the plastid. It is found in the chloroplast. It catalyses the reaction 3-phosphoshikimate + phosphoenolpyruvate = 5-O-(1-carboxyvinyl)-3-phosphoshikimate + phosphate. The protein operates within metabolic intermediate biosynthesis; chorismate biosynthesis; chorismate from D-erythrose 4-phosphate and phosphoenolpyruvate: step 6/7. Its function is as follows. Catalyzes the transfer of the enolpyruvyl moiety of phosphoenolpyruvate (PEP) to the 5-hydroxyl of shikimate-3-phosphate (S3P) to produce enolpyruvyl shikimate-3-phosphate and inorganic phosphate. The chain is 3-phosphoshikimate 1-carboxyvinyltransferase, chloroplastic from Solanum lycopersicum (Tomato).